We begin with the raw amino-acid sequence, 1423 residues long: Interphotoreceptor matrix proteoglycan 2 (1423 aa).

The N-terminal stretch at M1–A27 is a signal peptide. The Extracellular portion of the chain corresponds to E28–G1289. Residue N150 is glycosylated (N-linked (GlcNAc...) asparagine). Positions T245–D358 constitute an SEA 1 domain. Residues S265–Q273 form a hyaluronan-binding motif involved in chondroitin sulfate A-binding region. N-linked (GlcNAc...) asparagine glycosylation is found at N325 and N375. 3 disordered regions span residues A423–V469, D522–A559, and T577–L602. Acidic residues predominate over residues S523–L532. Low complexity predominate over residues L537–L546. The segment covering T577–V587 has biased composition (basic and acidic residues). N-linked (GlcNAc...) asparagine glycosylation is present at N676. Positions F886–R907 are disordered. The span at S889–S902 shows a compositional bias: polar residues. Residues R1083–Q1196 enclose the SEA 2 domain. N1128, N1142, and N1160 each carry an N-linked (GlcNAc...) asparagine glycan. EGF-like domains lie at Q1196 to L1234 and N1237 to E1279. 5 disulfide bridges follow: C1200–C1211, C1205–C1222, C1240–C1253, C1247–C1263, and C1265–C1278. A hyaluronan-binding motif involved in chondroitin sulfate C-binding region spans residues R1266–R1274. A helical membrane pass occupies residues I1290–A1310. Residues R1311–L1423 are Cytoplasmic-facing. A hyaluronan-binding motif involved in chondroitin sulfate C-binding region spans residues T1322–G1327.

Post-translationally, highly glycosylated (N- and O-linked carbohydrates). As to expression, expressed in retina.

The protein resides in the photoreceptor outer segment membrane. It localises to the photoreceptor inner segment membrane. The protein localises to the secreted. Its subcellular location is the extracellular space. It is found in the extracellular matrix. The protein resides in the interphotoreceptor matrix. Functionally, chondroitin sulfate- and hyaluronan-binding proteoglycan involved in the organization of interphotoreceptor matrix. This Gallus gallus (Chicken) protein is Interphotoreceptor matrix proteoglycan 2 (IMPG2).